We begin with the raw amino-acid sequence, 508 residues long: MTEPIQPQAAVAADENQIVAERRDKLRALRDQGIAYPNDFQPTHHAADLQTAYADADKEALEAKSLEVAIAGRMMLKRVMGKASFATVQDGSGQIQFFVTPADVGAETYDAFKKWDLGDIVAARGVLFRTNKGELSVKCTQLRLLAKALRPLPDKFHGLADQETRYRQRYVDLIVTPETRTTFRARTKAIASIRKFMGDADFMEVETPMLHPIPGGAAAKPFVTHHNALDMEMFLRIAPELYLKRLIVGGFERVFEINRNFRNEGVSPRHNPEFTMMEFYAAYTDYRWLMDFTERLIRQAAVDALGTATIQYQGRELDLAQPFHRLTITQAIQKYAPSYTDGQLSDDAFLRSELKRLGVDVTQPAFLNAGIGALQLALFEETAEAQLWEPTFIIDYPIEVSPLARESDTVAGITERFELFITGREIANGFSELNDPEDQAARFKKQVEQKDAGDEEAMFFDADYIRALEYGMPPTGGCGIGIDRLVMLLTDSPTIRDVLLFPHLRRED.

Residues Glu-418 and Glu-425 each coordinate Mg(2+).

Belongs to the class-II aminoacyl-tRNA synthetase family. In terms of assembly, homodimer. The cofactor is Mg(2+).

The protein resides in the cytoplasm. It carries out the reaction tRNA(Lys) + L-lysine + ATP = L-lysyl-tRNA(Lys) + AMP + diphosphate. The sequence is that of Lysine--tRNA ligase from Burkholderia thailandensis (strain ATCC 700388 / DSM 13276 / CCUG 48851 / CIP 106301 / E264).